The sequence spans 1024 residues: Myosin phosphatase Rho-interacting protein (1024 aa).

The interval 1–382 (MSAAKENPCR…DRRSTESSMT (382 aa)) is interaction with F-actin. The PH 1 domain occupies 43–150 (KPIYGGWLLL…WLEMLMVYPR (108 aa)). Positions 152–262 (NKQNQKKKRK…GDRVDGGRKV (111 aa)) are disordered. The span at 179 to 190 (SSSGGSSGSSSS) shows a compositional bias: low complexity. A phosphoserine mark is found at serine 193, serine 219, serine 221, serine 225, and serine 227. Residues 221 to 233 (SPAQSPSQSQPPA) show a composition bias toward low complexity. The span at 240-262 (PGLESKEDESTISGDRVDGGRKV) shows a compositional bias: basic and acidic residues. Serine 266, serine 270, serine 289, and serine 292 each carry phosphoserine. Disordered stretches follow at residues 274 to 301 (AKQDLRAEEQLPPLLSPPSPSTPHSRRS) and 328 to 379 (PSSD…STES). Threonine 295 is modified (phosphothreonine). The span at 333-349 (RQGRSERRAIPRKRDFA) shows a compositional bias: basic and acidic residues. Residue serine 364 is modified to Phosphoserine. Positions 386 to 482 (LNFKKGWLTK…WIQTIMKHVL (97 aa)) constitute a PH 2 domain. The segment at 486–583 (APDVTSSLPE…AEPGELERER (98 aa)) is disordered. The segment covering 488-508 (DVTSSLPEGKNKSTSFETCSR) has biased composition (polar residues). Serine 492 is subject to Phosphoserine. A compositionally biased stretch (basic and acidic residues) spans 522–545 (PEQKKSRARERRREGRSKTFDWAE). Residues 545–823 (EFRPIQQALA…SVQRELEVLS (279 aa)) form an interaction with RHOA region. Serine 617 bears the Phosphoserine mark. Residue threonine 645 is modified to Phosphothreonine. Residues 672–976 (HELTSLLEKE…AATEALGEKS (305 aa)) adopt a coiled-coil conformation. Serine 799 bears the Phosphoserine mark. The tract at residues 823–878 (SEQYSQKCLENAHLAQALEAERQALRQCQRENQELNAHNQELNNRLAAEITRLRTL) is interaction with PPP1R12A. Residues 972–995 (LGEKSPEGTTVSGYDIMKSKSNPD) form a disordered region. 5 positions are modified to phosphoserine: serine 976, glycine 979, serine 992, serine 1013, and serine 1015.

In terms of assembly, binds RHOA, PPP1R12A/MBS and PPP1R12C/MBS85 through adjacent coiled coil domains. Interacts with MYZAP. Binds F-actin through its N-terminus. Expressed in Kidney, Brain, Heart and Lung.

It is found in the cytoplasm. It localises to the cytoskeleton. Its function is as follows. Targets myosin phosphatase to the actin cytoskeleton. Required for the regulation of the actin cytoskeleton by RhoA and ROCK1. Depletion leads to an increased number of stress fibers in smooth muscle cells through stabilization of actin fibers by phosphorylated myosin. Overexpression of MRIP as well as its F-actin-binding region leads to disassembly of stress fibers in neuronal cells. In Mus musculus (Mouse), this protein is Myosin phosphatase Rho-interacting protein (Mprip).